Consider the following 101-residue polypeptide: Small ribosomal subunit protein uS14 (101 aa).

Belongs to the universal ribosomal protein uS14 family. As to quaternary structure, part of the 30S ribosomal subunit. Contacts proteins S3 and S10.

Binds 16S rRNA, required for the assembly of 30S particles and may also be responsible for determining the conformation of the 16S rRNA at the A site. This Enterobacter sp. (strain 638) protein is Small ribosomal subunit protein uS14.